The chain runs to 482 residues: Protein translocase subunit SecY (482 aa).

A disordered region spans residues 1–22; sequence MVIKKPANKVDKKSTFKSSNKK. Transmembrane regions (helical) follow at residues 41–61, 92–112, 137–157, 177–197, 201–221, 243–263, 303–323, 342–362, 405–425, and 426–446; these read ILFT…TVPG, FSIL…VQLL, LTKI…IFTL, AFYY…MLWI, ITIK…IIIS, IFFS…LVIL, VIPV…SQII, FNTW…TFLY, VVGS…SKLT, and QLPS…SVAI.

This sequence belongs to the SecY/SEC61-alpha family. Component of the Sec protein translocase complex. Heterotrimer consisting of SecY, SecE and SecG subunits. The heterotrimers can form oligomers, although 1 heterotrimer is thought to be able to translocate proteins. Interacts with the ribosome. Interacts with SecDF, and other proteins may be involved. Interacts with SecA.

Its subcellular location is the cell membrane. In terms of biological role, the central subunit of the protein translocation channel SecYEG. Consists of two halves formed by TMs 1-5 and 6-10. These two domains form a lateral gate at the front which open onto the bilayer between TMs 2 and 7, and are clamped together by SecE at the back. The channel is closed by both a pore ring composed of hydrophobic SecY resides and a short helix (helix 2A) on the extracellular side of the membrane which forms a plug. The plug probably moves laterally to allow the channel to open. The ring and the pore may move independently. The protein is Protein translocase subunit SecY of Mycoplasma capricolum subsp. capricolum (strain California kid / ATCC 27343 / NCTC 10154).